Here is a 511-residue protein sequence, read N- to C-terminus: MEKFEGYSEKQKSRQQYFVYPLLFQEYIYAFAHDYGLNGSEPVEIVSWNNKKFSSLLVKRLIIRMYQQNFLDNSVNHPNQDRLLDYKIFFYSEFYSQILSEGFAIVVEIPFSLRELSCPKEKEIPKFQNLRSIHSIFPFLEDKFLHLDYLSHIEIPYPIHLEILVQLLQYRIQDVPSLHLLRFFLNYYSNWNSFITSMKSILFFQKENKRLVKFLYNSYVSEYEFFLLFLRKQSSCLPLAYSGTFLERIHFSRKMEHFGIMYPGFSRKTLWFFMDPLIHYVRYQGKAILASKGSFFLKKKWKCYLINFWQYYFFFWTQPRRIHINQLANSCFDFMGYLSSVPKSPLLVRNQMLENSFLIDTRMKKFDTIVPATLLIGYLSKAQFCTGSGHPISKPIWTDLSDWDILDRFGRICRNLFHYHSGSSKKRTLYRLKYILRLSCARTLARKHKSTVRTFMQRLGSAFLEEFFTEEEQVFSLMFTKTTLFSFSGSHTERIWYLDIIGINDLVNPLN.

This sequence belongs to the intron maturase 2 family. MatK subfamily.

It localises to the plastid. The protein localises to the chloroplast. In terms of biological role, usually encoded in the trnK tRNA gene intron. Probably assists in splicing its own and other chloroplast group II introns. This is Maturase K from Hordeum vulgare subsp. spontaneum (Wild barley).